Consider the following 434-residue polypeptide: FAD-dependent monooxygenase cfoG (434 aa).

An N-terminal signal peptide occupies residues methionine 1–alanine 22. Residue glutamate 36 participates in FAD binding. Active-site residues include arginine 193 and tyrosine 233. FAD is bound by residues aspartate 314 and glycine 327.

Belongs to the paxM FAD-dependent monooxygenase family. Monomer. The cofactor is FAD.

It functions in the pathway secondary metabolite biosynthesis; flavonoid biosynthesis. Monooxygenase; part of the gene cluster that mediates the biosynthesis of chlorflavonin, a fungal flavonoid with acetolactate synthase inhibitory activity. Within the pathway, cfoG is responsible for the hydroxylation of the flavonoid skeleton at position C8. The pathway begins with the PKS-NRPS hybrid synthetase cfoA that uses benzoic acid or p-hydroxybenzoic acid as a starter unit with four rounds of chain elongation using malonyl-CoA to form the chalcone skeleton. Then, a new type of chalcone isomerase, cfoK, catalyzes the conversion of the chalcone into a flavanone by a histidine-mediated oxa-Michael addition mechanism. The desaturation of flavanone to flavone is catalyzed by a new type of flavone synthase, the flavin mononucleotide (FMN)-dependent oxidoreductase cfoJ. Monooxygenases cfoF, cfoG, and P450 cfoH are responsible for the hydroxylation of the flavonoid skeleton at sites C3, C8, and C2', respectively. Like cfoF, the dehydratase cfoI plays also a role in the hydroxylation of position C3. Methyltransferases cfoB, cfoC, and cfoD then catalyze the methylation of C7-OH, C8-OH, and C3-OH, respectively. Finally, the monooxygenase cfoE is responsible for the chlorination of flavonoid at position C3'. In Aspergillus candidus, this protein is FAD-dependent monooxygenase cfoG.